Reading from the N-terminus, the 87-residue chain is Small ribosomal subunit protein bS20 (87 aa).

It belongs to the bacterial ribosomal protein bS20 family.

In terms of biological role, binds directly to 16S ribosomal RNA. In Clostridium perfringens (strain ATCC 13124 / DSM 756 / JCM 1290 / NCIMB 6125 / NCTC 8237 / Type A), this protein is Small ribosomal subunit protein bS20.